The following is a 460-amino-acid chain: UDP-N-acetylmuramoylalanine--D-glutamate ligase (460 aa).

ATP is bound at residue 115–121 (GTDGKTT).

It belongs to the MurCDEF family.

It is found in the cytoplasm. The enzyme catalyses UDP-N-acetyl-alpha-D-muramoyl-L-alanine + D-glutamate + ATP = UDP-N-acetyl-alpha-D-muramoyl-L-alanyl-D-glutamate + ADP + phosphate + H(+). It participates in cell wall biogenesis; peptidoglycan biosynthesis. Its function is as follows. Cell wall formation. Catalyzes the addition of glutamate to the nucleotide precursor UDP-N-acetylmuramoyl-L-alanine (UMA). The polypeptide is UDP-N-acetylmuramoylalanine--D-glutamate ligase (Chlorobium luteolum (strain DSM 273 / BCRC 81028 / 2530) (Pelodictyon luteolum)).